The following is an 861-amino-acid chain: Bifunctional uridylyltransferase/uridylyl-removing enzyme (861 aa).

The uridylyltransferase stretch occupies residues 1-321 (MKNDNRIIKN…VYHQKQKIIR (321 aa)). Residues 322–678 (LDDEFQLSNR…IMPHHSQGGT (357 aa)) form a uridylyl-removing region. One can recognise an HD domain in the interval 440-562 (VDQHTLFVIR…LPHARYLDYL (123 aa)). 2 consecutive ACT domains span residues 679–760 (EVFI…AVSR) and 788–861 (QLFL…KSKY).

The protein belongs to the GlnD family. It depends on Mg(2+) as a cofactor.

The enzyme catalyses [protein-PII]-L-tyrosine + UTP = [protein-PII]-uridylyl-L-tyrosine + diphosphate. It catalyses the reaction [protein-PII]-uridylyl-L-tyrosine + H2O = [protein-PII]-L-tyrosine + UMP + H(+). Uridylyltransferase (UTase) activity is inhibited by glutamine, while glutamine activates uridylyl-removing (UR) activity. Its function is as follows. Modifies, by uridylylation and deuridylylation, the PII regulatory proteins (GlnB and homologs), in response to the nitrogen status of the cell that GlnD senses through the glutamine level. Under low glutamine levels, catalyzes the conversion of the PII proteins and UTP to PII-UMP and PPi, while under higher glutamine levels, GlnD hydrolyzes PII-UMP to PII and UMP (deuridylylation). Thus, controls uridylylation state and activity of the PII proteins, and plays an important role in the regulation of nitrogen assimilation and metabolism. This is Bifunctional uridylyltransferase/uridylyl-removing enzyme from Legionella pneumophila (strain Corby).